The chain runs to 702 residues: Methionine--tRNA ligase (702 aa).

The short motif at 14–24 (PYANGPVHLGH) is the 'HIGH' region element. 4 residues coordinate Zn(2+): cysteine 146, cysteine 149, cysteine 159, and cysteine 162. The 'KMSKS' region signature appears at 344–348 (KFSKS). Lysine 347 serves as a coordination point for ATP. The 102-residue stretch at 601–702 (DFLKVDLRVA…GDEINGQQIQ (102 aa)) folds into the tRNA-binding domain.

The protein belongs to the class-I aminoacyl-tRNA synthetase family. MetG type 1 subfamily. In terms of assembly, homodimer. The cofactor is Zn(2+).

It localises to the cytoplasm. The enzyme catalyses tRNA(Met) + L-methionine + ATP = L-methionyl-tRNA(Met) + AMP + diphosphate. Functionally, is required not only for elongation of protein synthesis but also for the initiation of all mRNA translation through initiator tRNA(fMet) aminoacylation. The protein is Methionine--tRNA ligase of Chlorobium limicola (strain DSM 245 / NBRC 103803 / 6330).